The chain runs to 604 residues: Threonine--tRNA ligase (604 aa).

Residues aspartate 209–proline 500 are catalytic. Zn(2+) is bound by residues cysteine 301, histidine 352, and histidine 477.

Belongs to the class-II aminoacyl-tRNA synthetase family. Homodimer. The cofactor is Zn(2+).

The protein resides in the cytoplasm. The enzyme catalyses tRNA(Thr) + L-threonine + ATP = L-threonyl-tRNA(Thr) + AMP + diphosphate + H(+). Functionally, catalyzes the attachment of threonine to tRNA(Thr) in a two-step reaction: L-threonine is first activated by ATP to form Thr-AMP and then transferred to the acceptor end of tRNA(Thr). Also edits incorrectly charged L-seryl-tRNA(Thr). The polypeptide is Threonine--tRNA ligase (Helicobacter hepaticus (strain ATCC 51449 / 3B1)).